The chain runs to 20 residues: Dahlein-5.3 (20 aa).

Expressed by the skin dorsal glands.

The protein localises to the secreted. Functionally, has no antimicrobial activity. Strongly inhibits the formation of NO by neuronal nitric oxide synthase at micromolar concentrations. The polypeptide is Dahlein-5.3 (Ranoidea dahlii (Dahl's aquatic frog)).